The primary structure comprises 1549 residues: ATP-binding cassette sub-family C member 9 (1549 aa).

At 1–30 the chain is on the extracellular side; sequence MSLSFCGNNISSYNINDGVLQNSCFVDALN. The N-linked (GlcNAc...) asparagine glycan is linked to Asn9. Residues 31–51 traverse the membrane as a helical segment; that stretch reads LVPHVFLLFITFPILFIGWGS. Over 52–72 the chain is Cytoplasmic; that stretch reads QSSKVQIHHNTWLHFPGHNLR. Residues 73–93 traverse the membrane as a helical segment; that stretch reads WILTFALLFVHVCEIAEGIVS. The Extracellular segment spans residues 94–101; that stretch reads DSRRESRH. The chain crosses the membrane as a helical span at residues 102–122; that stretch reads LHLFMPAVMGFVATTTSIVYY. Residues 123–132 lie on the Cytoplasmic side of the membrane; the sequence is HNIETSNFPK. A helical transmembrane segment spans residues 133–153; that stretch reads LLLALFLYWVMAFITKTIKLV. The Extracellular portion of the chain corresponds to 154–167; that stretch reads KYCQSGLDISNLRF. Residues 168-188 traverse the membrane as a helical segment; sequence CITGMMVILNGLLMAVEINVI. Topologically, residues 189 to 301 are cytoplasmic; that stretch reads RVRRYVFFMN…AFGRPILLSS (113 aa). The ABC transmembrane type-1 1 domain maps to 297–597; that stretch reads ILLSSTFRYL…LSTVVRFAVK (301 aa). A helical membrane pass occupies residues 302-322; that stretch reads TFRYLADLLGFAGPLCISGIV. Over 323–350 the chain is Extracellular; it reads QRVNETQNGTNNTTGISETLSSKEFLEN. Residues Asn326, Asn330, Asn333, and Asn334 are each glycosylated (N-linked (GlcNAc...) asparagine). The chain crosses the membrane as a helical span at residues 351-371; that stretch reads AYVLAVLLFLALILQRTFLQA. Residues 372–423 are Cytoplasmic-facing; the sequence is SYYVTIETGINLRGALLAMIYNKILRLSTSNLSMGEMTLGQINNLVAIETNQ. The chain crosses the membrane as a helical span at residues 424-444; sequence LMWFLFLCPNLWAMPVQIIMG. Over 445–455 the chain is Extracellular; the sequence is VILLYNLLGSS. A helical membrane pass occupies residues 456-476; it reads ALVGAAVIVLLAPIQYFIATK. Topologically, residues 477–531 are cytoplasmic; sequence LAEAQKSTLDYSTERLKKTNEILKGIKLLKLYAWEHIFCKSVEETRMKELSSLKT. Residues 532–552 form a helical membrane-spanning segment; it reads FALYTSLSIFMNAAIPIAAVL. At 553–571 the chain is on the extracellular side; that stretch reads ATFVTHAYASGNNLKPAEA. A helical membrane pass occupies residues 572–592; it reads FASLSLFHILVTPLFLLSTVV. Topologically, residues 593–990 are cytoplasmic; that stretch reads RFAVKAIISV…TCWRYLTSGG (398 aa). An ABC transporter 1 domain is found at 672–912; it reads IKVTNGYFSW…DVELYEHWKT (241 aa). An ATP-binding site is contributed by 705–712; that stretch reads GQVGCGKS. The tract at residues 944 to 967 is disordered; sequence REAKAQMEDEDEEEEEEEDEDDNM. Residues 951–966 show a composition bias toward acidic residues; it reads EDEDEEEEEEEDEDDN. A helical transmembrane segment spans residues 991–1011; the sequence is FFLLILMIFSKLLKHSVIVAI. An ABC transmembrane type-1 2 domain is found at 994–1274; that stretch reads LILMIFSKLL…VVRNLADLEV (281 aa). The Extracellular segment spans residues 1012 to 1034; sequence DYWLATWTSEYSINNTGKADQTY. The chain crosses the membrane as a helical span at residues 1035–1055; sequence YVAGFSILCGAGIFLCLVTSL. Residues 1056–1127 lie on the Cytoplasmic side of the membrane; that stretch reads TVEWMGLTAA…TLLCLSAIGM (72 aa). A helical transmembrane segment spans residues 1128–1148; it reads ISYATPVFLVALLPLGVAFYF. Topologically, residues 1149-1245 are extracellular; it reads IQKYFRVASK…IASISGSSNS (97 aa). A helical transmembrane segment spans residues 1246 to 1266; it reads GLVGLGLLYALTITNYLNWVV. Topologically, residues 1267-1549 are cytoplasmic; that stretch reads RNLADLEVQM…LFSTLVMTNK (283 aa). Positions 1312-1546 constitute an ABC transporter 2 domain; sequence IKIHDLCVRY…KNGLFSTLVM (235 aa). An ATP-binding site is contributed by 1346–1353; it reads GRTGSGKS.

Belongs to the ABC transporter superfamily. ABCC family. Conjugate transporter (TC 3.A.1.208) subfamily. Interacts with KCNJ11. Interacts with KCNJ8.

Its subcellular location is the membrane. In terms of biological role, subunit of ATP-sensitive potassium channels (KATP). Can form cardiac and smooth muscle-type KATP channels with KCNJ11. KCNJ11 forms the channel pore while ABCC9 is required for activation and regulation. Can form a sulfonylurea-sensitive but ATP-insensitive potassium channel with KCNJ8. This Homo sapiens (Human) protein is ATP-binding cassette sub-family C member 9 (ABCC9).